Consider the following 130-residue polypeptide: Small ribosomal subunit protein uS9 (130 aa).

Belongs to the universal ribosomal protein uS9 family.

The protein is Small ribosomal subunit protein uS9 of Polaromonas sp. (strain JS666 / ATCC BAA-500).